The following is a 606-amino-acid chain: NADH-ubiquinone oxidoreductase chain 5 (606 aa).

14 helical membrane-spanning segments follow: residues 1–21 (MNMFSSCMITALVILTLPIIM), 43–63 (AFMISMIPTMMFIYSGQETII), 87–107 (MIFVPVALFVTWSIMEFSMWY), 117–137 (FFKYLLLFLITMMVLVTANNM), 140–160 (LFIGWEGVGIMSFLLIGWWYG), 171–191 (AVLYNRIGDVGFIMTMAWFLL), 241–261 (TPVSALLHSSTMVVAGVFLLI), 273–293 (IQTLTLCLGAITTLFTAICAL), 310–330 (LGLMMVTIGINQPYLAFLHIC), 365–385 (VLPFTTTSLIIGSLALTGMPF), 409–429 (LLITLVATSLTAAYSTRIMFF), 457–477 (LLIGSVFAGYIISHSITPTTI), 488–508 (MTALAVTILGFILALELNLTT), and 582–602 (GLIKLYFLSFMLTMILSLLIL).

Belongs to the complex I subunit 5 family. In terms of assembly, core subunit of respiratory chain NADH dehydrogenase (Complex I) which is composed of 45 different subunits.

The protein localises to the mitochondrion inner membrane. It carries out the reaction a ubiquinone + NADH + 5 H(+)(in) = a ubiquinol + NAD(+) + 4 H(+)(out). Core subunit of the mitochondrial membrane respiratory chain NADH dehydrogenase (Complex I) which catalyzes electron transfer from NADH through the respiratory chain, using ubiquinone as an electron acceptor. Essential for the catalytic activity and assembly of complex I. This Canis lupus (Gray wolf) protein is NADH-ubiquinone oxidoreductase chain 5 (MT-ND5).